A 432-amino-acid polypeptide reads, in one-letter code: Adenylosuccinate synthetase (432 aa).

GTP-binding positions include 13 to 19 (GDEGKGK) and 41 to 43 (GHT). The Proton acceptor role is filled by D14. Mg(2+) contacts are provided by D14 and G41. IMP is bound by residues 14-17 (DEGK), 39-42 (NAGH), T130, R144, Q225, T240, and R304. H42 functions as the Proton donor in the catalytic mechanism. 300–306 (ATTGRRR) is a substrate binding site. GTP contacts are provided by residues R306, 332–334 (KLD), and 415–417 (STG).

Belongs to the adenylosuccinate synthetase family. As to quaternary structure, homodimer. It depends on Mg(2+) as a cofactor.

It is found in the cytoplasm. The enzyme catalyses IMP + L-aspartate + GTP = N(6)-(1,2-dicarboxyethyl)-AMP + GDP + phosphate + 2 H(+). The protein operates within purine metabolism; AMP biosynthesis via de novo pathway; AMP from IMP: step 1/2. In terms of biological role, plays an important role in the de novo pathway of purine nucleotide biosynthesis. Catalyzes the first committed step in the biosynthesis of AMP from IMP. This chain is Adenylosuccinate synthetase, found in Salmonella arizonae (strain ATCC BAA-731 / CDC346-86 / RSK2980).